A 119-amino-acid polypeptide reads, in one-letter code: Protein FATTY ACID EXPORT 5 (119 aa).

A run of 3 helical transmembrane segments spans residues 27–47, 57–77, and 85–105; these read SIASLAGGAGTGLLVVLAGFI, TSLLATLLETVIAAALTFVMG, and KIMPAALVAGISALMTCFYVY.

This sequence belongs to the TMEM14 family.

Its subcellular location is the membrane. Its function is as follows. May be involved in free fatty acids export. The protein is Protein FATTY ACID EXPORT 5 of Arabidopsis thaliana (Mouse-ear cress).